A 183-amino-acid polypeptide reads, in one-letter code: Auxin-responsive protein IAA20 (183 aa).

Disordered stretches follow at residues 1–23 and 42–77; these read MELE…TATA and GFEE…NKRR. An EAR-like (transcriptional repression) motif is present at residues 3–7; it reads LELGL. In terms of domain architecture, PB1 spans 98-183; that stretch reads GGYVKVKMEG…KSVKRLKILV (86 aa).

Belongs to the Aux/IAA family. As to quaternary structure, homodimers and heterodimers. In terms of tissue distribution, expressed at very low levels in etiolated seedlings and flowers.

The protein resides in the nucleus. In terms of biological role, aux/IAA proteins are short-lived transcriptional factors that function as repressors of early auxin response genes at low auxin concentrations. The polypeptide is Auxin-responsive protein IAA20 (IAA20) (Oryza sativa subsp. japonica (Rice)).